A 302-amino-acid chain; its full sequence is Dermonecrotic toxin LiSicTox-alphaIA2bii (302 aa).

The first 14 residues, isoleucine 1–alanine 14, serve as a signal peptide directing secretion. The propeptide occupies alanine 15–arginine 22. The active site involves histidine 34. Mg(2+) contacts are provided by glutamate 54 and aspartate 56. The active-site Nucleophile is the histidine 70. 2 cysteine pairs are disulfide-bonded: cysteine 74–cysteine 80 and cysteine 76–cysteine 219. Aspartate 114 is a binding site for Mg(2+). Residue asparagine 279 is glycosylated (N-linked (GlcNAc...) asparagine).

This sequence belongs to the arthropod phospholipase D family. Class II subfamily. The cofactor is Mg(2+). In terms of tissue distribution, expressed by the venom gland.

It localises to the secreted. It carries out the reaction an N-(acyl)-sphingosylphosphocholine = an N-(acyl)-sphingosyl-1,3-cyclic phosphate + choline. The catalysed reaction is an N-(acyl)-sphingosylphosphoethanolamine = an N-(acyl)-sphingosyl-1,3-cyclic phosphate + ethanolamine. The enzyme catalyses a 1-acyl-sn-glycero-3-phosphocholine = a 1-acyl-sn-glycero-2,3-cyclic phosphate + choline. It catalyses the reaction a 1-acyl-sn-glycero-3-phosphoethanolamine = a 1-acyl-sn-glycero-2,3-cyclic phosphate + ethanolamine. Its function is as follows. Dermonecrotic toxins cleave the phosphodiester linkage between the phosphate and headgroup of certain phospholipids (sphingolipid and lysolipid substrates), forming an alcohol (often choline) and a cyclic phosphate. This toxin acts on sphingomyelin (SM). It may also act on ceramide phosphoethanolamine (CPE), lysophosphatidylcholine (LPC) and lysophosphatidylethanolamine (LPE), but not on lysophosphatidylserine (LPS), and lysophosphatidylglycerol (LPG). It acts by transphosphatidylation, releasing exclusively cyclic phosphate products as second products. Induces dermonecrosis, hemolysis, increased vascular permeability, edema, inflammatory response, and platelet aggregation. The protein is Dermonecrotic toxin LiSicTox-alphaIA2bii of Loxosceles intermedia (Brown spider).